A 107-amino-acid chain; its full sequence is Late embryogenesis abundant protein M10 (107 aa).

The N-terminal stretch at 1–19 is a signal peptide; the sequence is MGNLMSLVLVALLFSLSLA.

Functionally, may be involved in the acquisition of desiccation tolerance during late phase of embryogenesis. In Arabidopsis thaliana (Mouse-ear cress), this protein is Late embryogenesis abundant protein M10.